The primary structure comprises 258 residues: Short-chain dehydrogenase/reductase olcF (258 aa).

Val-12, Asp-58, and Arg-120 together coordinate NADP(+). Residue Ser-138 is the Proton donor of the active site. 3 residues coordinate NADP(+): Tyr-152, Lys-156, and Val-185. Tyr-152 (proton acceptor) is an active-site residue. Lys-156 serves as the catalytic Lowers pKa of active site Tyr.

The protein belongs to the short-chain dehydrogenases/reductases (SDR) family.

The protein operates within secondary metabolite biosynthesis; terpenoid biosynthesis. Short-chain dehydrogenase/reductase; part of the gene cluster that mediates the biosynthesis of 15-deoxyoxalicine B. The first step of the pathway is the synthesis of nicotinyl-CoA from nicotinic acid by the nicotinic acid-CoA ligase olcI. Nicotinyl-CoA is then a substrate of polyketide synthase olcA to produce 4-hydroxy-6-(3-pyridinyl)-2H-pyran-2-one (HPPO) which is further prenylated by the polyprenyl transferase olcH to yield geranylgeranyl-HPPO. Geranylgeranyl pyrophosphate is provided by the cluster-specific geranylgeranyl pyrophosphate synthase olcC. The FAD-dependent monooxygenase olcE catalyzes the epoxidation of geranylgeranyl-HPPO and the terpene cyclase olcD catalyzes the cyclization of the terpenoid component, resulting in the formation of the tricyclic terpene moiety seen in predecaturin E. The cytochrome P450 monooxygenase then catalyzes the allylic oxidation of predecaturin E, which is followed by spirocylization with concomitant loss of one molecule of water to form decaturin E. Decaturin E is the substrate of the cytochrome P450 monooxygenase olcJ which hydroxylates it at the C-29 position to form decaturin F. The short-chain dehydrogenase/reductase olcF may catalyze the oxidation of decaturin F to generate the 29-hydroxyl-27-one intermediate, and subsequent hemiacetal formation probably leads to the formation of decaturin C. The dioxygenase olcK may be a peroxisomal enzyme that catalyzes the hydroxylation of decaturin C into decaturin A once decaturin C is shuttled into the peroxisome by the MFS transporter olcL. Finally the cytochrome P450 monooxygenase olcB catalyzes the oxidative rearrangement to yield 15-deoxyoxalicine B. In the absence of olcJ, decaturin E may be shunted to a pathway in which it is oxidized to a ketone, possibly by olcF, to form decaturin D, which undergoes further allylic oxidation to yield decaturin G. Moreover, in the absence of oclK or oclL, oclB can convert decaturin C into 15-deoxyoxalicine A. In Penicillium canescens, this protein is Short-chain dehydrogenase/reductase olcF.